A 527-amino-acid polypeptide reads, in one-letter code: MENQEKASIAGHMFDVVVIGGGISGLSAAKLLTEYGVSVLVLEARDRVGGRTYTIRNEHVDYVDVGGAYVGPTQNRILRLSKELGIETYKVNVSERLVQYVKGKTYPFRGAFPPVWNPIAYLDYNNLWRTIDNMGKEIPADAPWEAQHADEWDKMTMKELIDKICWTKTARRFAYLFVNINVTSEPHEVSALWFLWYVKQCGGTTRIFSVTNGGQERKFVGGSGQVSERIMDLLGDQVKLNHPVTHVDQSSNNIIIETLNHEHYECKYVINAIPPTLTAKIHFRPELPAERNQLIQRLPMGAIIKCMMYYKEAFWKKKDYCGCMIIEDEDAPISITLDDTKPDGSLPAIMGFILARKADRLAKLHKEIRKKKICELYAKVLGSQEALHPVHYEEKNWCEEQYSGGCYTAYFPPGIMTQYGRVIRQPVGRIFFAGTETATKWSGYMEGAVEAGERAAREVLNGLGKVTEKDIWVQEPESKDVPAVEITHTFWERNLPSVSGLLKIIGFSTSVTALGFVLYKYKLLPRS.

Met1 is subject to N-acetylmethionine. Over 1–497 (MENQEKASIA…HTFWERNLPS (497 aa)) the chain is Cytoplasmic. The residue at position 383 (Ser383) is a Phosphoserine. An S-8alpha-FAD cysteine modification is found at Cys406. The helical; Anchor for type IV membrane protein transmembrane segment at 498–518 (VSGLLKIIGFSTSVTALGFVL) threads the bilayer. The Mitochondrial intermembrane segment spans residues 519-527 (YKYKLLPRS). Positions 520–522 (KYK) are interaction with membrane phospholipid headgroups.

It belongs to the flavin monoamine oxidase family. In terms of assembly, monomer, homo- or heterodimer (containing two subunits of similar size). Each subunit contains a covalently bound flavin. Enzymatically active as monomer. It depends on FAD as a cofactor.

The protein resides in the mitochondrion outer membrane. The catalysed reaction is a secondary aliphatic amine + O2 + H2O = a primary amine + an aldehyde + H2O2. It catalyses the reaction a primary methyl amine + O2 + H2O = an aldehyde + H2O2 + NH4(+). The enzyme catalyses (R)-adrenaline + O2 + H2O = (R)-3,4-dihydroxymandelaldehyde + methylamine + H2O2. It carries out the reaction dopamine + O2 + H2O = 3,4-dihydroxyphenylacetaldehyde + H2O2 + NH4(+). The catalysed reaction is tyramine + O2 + H2O = (4-hydroxyphenyl)acetaldehyde + H2O2 + NH4(+). It catalyses the reaction (R)-noradrenaline + O2 + H2O = (R)-3,4-dihydroxymandelaldehyde + H2O2 + NH4(+). The enzyme catalyses serotonin + O2 + H2O = (5-hydroxyindol-3-yl)acetaldehyde + H2O2 + NH4(+). It carries out the reaction kynuramine + O2 + H2O = 3-(2-aminophenyl)-3-oxopropanal + H2O2 + NH4(+). The catalysed reaction is tryptamine + O2 + H2O = indole-3-acetaldehyde + H2O2 + NH4(+). It catalyses the reaction 2-phenylethylamine + O2 + H2O = 2-phenylacetaldehyde + H2O2 + NH4(+). Catalyzes the oxidative deamination of primary and some secondary amine such as neurotransmitters, with concomitant reduction of oxygen to hydrogen peroxide and has important functions in the metabolism of neuroactive and vasoactive amines in the central nervous system and peripheral tissues. Preferentially oxidizes serotonin. Also catalyzes the oxidative deamination of kynuramine to 3-(2-aminophenyl)-3-oxopropanal that can spontaneously condense to 4-hydroxyquinoline. This chain is Amine oxidase [flavin-containing] A, found in Pongo abelii (Sumatran orangutan).